Here is a 461-residue protein sequence, read N- to C-terminus: Arginine biosynthesis bifunctional protein ArgJ, chloroplastic (461 aa).

Substrate-binding residues include T202, K228, T239, E326, N456, and T461. The Nucleophile role is filled by T239.

This sequence belongs to the ArgJ family. Heterodimer of an alpha and a beta chain.

Its subcellular location is the plastid. It localises to the chloroplast. The enzyme catalyses N(2)-acetyl-L-ornithine + L-glutamate = N-acetyl-L-glutamate + L-ornithine. It carries out the reaction L-glutamate + acetyl-CoA = N-acetyl-L-glutamate + CoA + H(+). Its pathway is amino-acid biosynthesis; L-arginine biosynthesis; L-ornithine and N-acetyl-L-glutamate from L-glutamate and N(2)-acetyl-L-ornithine (cyclic): step 1/1. The protein operates within amino-acid biosynthesis; L-arginine biosynthesis; N(2)-acetyl-L-ornithine from L-glutamate: step 1/4. In terms of biological role, catalyzes two activities which are involved in the cyclic version of arginine biosynthesis: the synthesis of acetylglutamate from glutamate and acetyl-CoA, and of ornithine by transacetylation between acetylornithine and glutamate. This is Arginine biosynthesis bifunctional protein ArgJ, chloroplastic from Ostreococcus lucimarinus (strain CCE9901).